Reading from the N-terminus, the 352-residue chain is Putative F-box protein At5g14160 (352 aa).

Positions 14 to 60 (GVDWSELPEDVIRLVLRRLRLSDFHRARAVCSTWCRVWGDCVSKPNQ) constitute an F-box domain.

The chain is Putative F-box protein At5g14160 from Arabidopsis thaliana (Mouse-ear cress).